The chain runs to 353 residues: Basic membrane protein C (353 aa).

An N-terminal signal peptide occupies residues Met1–Ala16. Cys17 carries the N-palmitoyl cysteine lipid modification. Cys17 carries S-diacylglycerol cysteine lipidation.

It belongs to the BMP lipoprotein family. In terms of assembly, monomer.

Its subcellular location is the cell inner membrane. In terms of biological role, may be part of an ABC-type nucleoside uptake system involved in the purine salvage pathway. This chain is Basic membrane protein C (bmpC), found in Borreliella burgdorferi (strain N40) (Borrelia burgdorferi).